The chain runs to 377 residues: Histone deacetylase 8 (377 aa).

Residues 5-336 (RVDVFWHEGM…LHAMLEGVLK (332 aa)) form a histone deacetylase region. The active-site Proton donor/acceptor is the histidine 145. Positions 182, 184, and 274 each coordinate Zn(2+).

The protein belongs to the histone deacetylase family. Zn(2+) serves as cofactor. As to expression, expressed in stems, leaves, flowers, siliques and mature seeds.

It localises to the nucleus. The protein resides in the cytoplasm. It catalyses the reaction N(6)-acetyl-L-lysyl-[histone] + H2O = L-lysyl-[histone] + acetate. Functionally, responsible for the deacetylation of lysine residues on the N-terminal part of the core histones (H2A, H2B, H3 and H4). Histone deacetylation gives a tag for epigenetic repression and plays an important role in transcriptional regulation, cell cycle progression and developmental events. Histone deacetylases act via the formation of large multiprotein complexes. This chain is Histone deacetylase 8, found in Arabidopsis thaliana (Mouse-ear cress).